A 143-amino-acid chain; its full sequence is MSDNKMSIEFVSKSENEAFARVAVAAFVAQLDPTIDEINDVKTAVSEAVTNSIIHGYENREDGLVRIEAEINEDQVTIAIIDKGIGIDNIEQAMEPLYTSRPDLERSGMGFTVMETFMDALEVDSEKGNGTKVVIKKKFNVVS.

It belongs to the anti-sigma-factor family.

It catalyses the reaction L-seryl-[protein] + ATP = O-phospho-L-seryl-[protein] + ADP + H(+). It carries out the reaction L-threonyl-[protein] + ATP = O-phospho-L-threonyl-[protein] + ADP + H(+). Functionally, binds to sigma F and blocks its ability to form an RNA polymerase holoenzyme (E-sigma F). Phosphorylates SpoIIAA on a serine residue. This phosphorylation may enable SpoIIAA to act as an anti-anti-sigma factor that counteracts SpoIIAB and thus releases sigma F from inhibition. The sequence is that of Anti-sigma F factor from Clostridium beijerinckii (strain ATCC 51743 / NCIMB 8052) (Clostridium acetobutylicum).